Reading from the N-terminus, the 131-residue chain is D-ribose pyranase (131 aa).

Catalysis depends on His20, which acts as the Proton donor. Residues Asp28, His98, and Tyr120 to Asn122 contribute to the substrate site.

This sequence belongs to the RbsD / FucU family. RbsD subfamily. Homodecamer.

The protein localises to the cytoplasm. The catalysed reaction is beta-D-ribopyranose = beta-D-ribofuranose. It functions in the pathway carbohydrate metabolism; D-ribose degradation; D-ribose 5-phosphate from beta-D-ribopyranose: step 1/2. Catalyzes the interconversion of beta-pyran and beta-furan forms of D-ribose. The protein is D-ribose pyranase of Lactobacillus gasseri (strain ATCC 33323 / DSM 20243 / BCRC 14619 / CIP 102991 / JCM 1131 / KCTC 3163 / NCIMB 11718 / NCTC 13722 / AM63).